Reading from the N-terminus, the 305-residue chain is MGSMAFHKSRLFLTFGDASEIWLSTLSHLTRKNYASGINFLVSLEILDLSETLIKAISLDHSESLFKIKSLDVFNGKVVSEASKQARAACYISFTKFLYRLTKGYIKPAIPLKDFGNTTFFKIRDKIKTESISKQEWTVFFEALRIVNYRDYLIGKLIVQGIRKLDEILSLRTDDLFFASNQISFRIKKRQNKETKILITFPISLMEELQKYTCGRNGRVFVSKIGIPVTTSQVAHNFRLAEFYSAMKIKITPRVLRASALIHLKQIGLKDEEIMRISCLSSRQSVCSYCSGEEVSPLVQTPPIL.

In terms of domain architecture, Core-binding (CB) spans 13–99 (LTFGDASEIW…CYISFTKFLY (87 aa)). Residues 127 to 305 (IKTESISKQE…SPLVQTPPIL (179 aa)) form the Tyr recombinase domain. Active-site residues include Lys-188 and Arg-257. Tyr-289 (O-(3'-phospho-DNA)-tyrosine intermediate) is an active-site residue.

This sequence belongs to the 'phage' integrase family.

This chain is Virulence plasmid integrase pGP7-D, found in Chlamydia trachomatis serovar L2 (strain ATCC VR-902B / DSM 19102 / 434/Bu).